Reading from the N-terminus, the 494-residue chain is uncharacterized protein (494 aa).

This sequence belongs to the TPP enzyme family.

This is an uncharacterized protein from Methanocaldococcus jannaschii (strain ATCC 43067 / DSM 2661 / JAL-1 / JCM 10045 / NBRC 100440) (Methanococcus jannaschii).